The sequence spans 226 residues: ATP synthase F(0) complex subunit a (226 aa).

The next 6 membrane-spanning stretches (helical) occupy residues 6–26 (FAPF…IITF), 68–88 (WTLM…LGLL), 97–117 (QLSM…IMGF), 138–158 (IPML…ALAV), 164–184 (ITAG…LSSI), and 195–215 (ILFL…YVFT).

The protein belongs to the ATPase A chain family. Component of the ATP synthase complex composed at least of ATP5F1A/subunit alpha, ATP5F1B/subunit beta, ATP5MC1/subunit c (homooctomer), MT-ATP6/subunit a, MT-ATP8/subunit 8, ATP5ME/subunit e, ATP5MF/subunit f, ATP5MG/subunit g, ATP5MK/subunit k, ATP5MJ/subunit j, ATP5F1C/subunit gamma, ATP5F1D/subunit delta, ATP5F1E/subunit epsilon, ATP5PF/subunit F6, ATP5PB/subunit b, ATP5PD/subunit d, ATP5PO/subunit OSCP. ATP synthase complex consists of a soluble F(1) head domain (subunits alpha(3) and beta(3)) - the catalytic core - and a membrane F(0) domain - the membrane proton channel (subunits c, a, 8, e, f, g, k and j). These two domains are linked by a central stalk (subunits gamma, delta, and epsilon) rotating inside the F1 region and a stationary peripheral stalk (subunits F6, b, d, and OSCP). Interacts with DNAJC30; interaction is direct.

It is found in the mitochondrion inner membrane. It carries out the reaction H(+)(in) = H(+)(out). In terms of biological role, subunit a, of the mitochondrial membrane ATP synthase complex (F(1)F(0) ATP synthase or Complex V) that produces ATP from ADP in the presence of a proton gradient across the membrane which is generated by electron transport complexes of the respiratory chain. ATP synthase complex consist of a soluble F(1) head domain - the catalytic core - and a membrane F(1) domain - the membrane proton channel. These two domains are linked by a central stalk rotating inside the F(1) region and a stationary peripheral stalk. During catalysis, ATP synthesis in the catalytic domain of F(1) is coupled via a rotary mechanism of the central stalk subunits to proton translocation. With the subunit c (ATP5MC1), forms the proton-conducting channel in the F(0) domain, that contains two crucial half-channels (inlet and outlet) that facilitate proton movement from the mitochondrial intermembrane space (IMS) into the matrix. Protons are taken up via the inlet half-channel and released through the outlet half-channel, following a Grotthuss mechanism. The protein is ATP synthase F(0) complex subunit a of Didelphis virginiana (North American opossum).